Consider the following 131-residue polypeptide: Large ribosomal subunit protein bL17 (131 aa).

The protein belongs to the bacterial ribosomal protein bL17 family. Part of the 50S ribosomal subunit. Contacts protein L32.

The polypeptide is Large ribosomal subunit protein bL17 (Burkholderia multivorans (strain ATCC 17616 / 249)).